A 234-amino-acid chain; its full sequence is MKDEIFKKPLEKQFEFDANVASVFDDMVARSVPFYAQNLKLITQLITHFAPQNAKICDLGCSTASLLLALFEKRKDLQLSGVDNAKAMLDIARNKTSAFGARVDFYEQNLDEFSFFKNDVFVATYTMQFIRPPKRQEIIDKIYQNLNDGGIFIMSEKILYEDVKISKKMIEIYENYKQDQGYSKLEIATKREALENILIPYTQNENINMLKNSGFKIIESVFKWVNFETFVAFK.

S-adenosyl-L-methionine contacts are provided by residues tyrosine 35, 60 to 62 (GCS), 83 to 84 (DN), and arginine 191.

Belongs to the class I-like SAM-binding methyltransferase superfamily. Cx-SAM synthase family. In terms of assembly, homodimer.

It catalyses the reaction prephenate + S-adenosyl-L-methionine = carboxy-S-adenosyl-L-methionine + 3-phenylpyruvate + H2O. In terms of biological role, catalyzes the conversion of S-adenosyl-L-methionine (SAM) to carboxy-S-adenosyl-L-methionine (Cx-SAM). The polypeptide is Carboxy-S-adenosyl-L-methionine synthase (Campylobacter lari (strain RM2100 / D67 / ATCC BAA-1060)).